Consider the following 397-residue polypeptide: MGFRTLDDVDVTGKRVLVRVDFNVPMAQGKVCDDTRLKRHKETLLELQKRGAKLILLSHCGRPKGQVEPEFSLHPVVQVLEKIINQPVNFASDCIGVAVQTAVEALQNGGILLLENVRFHSGEEKNAGSFAEALAHNGDLYVNDAFSVSHRAHASVEGITHFLPSYAGRSLQCELQALEKGLGKPERPVIAIVGGAKVSSKLFVLNHLVKKVDYLVIGGGMANSFLAAQGVCVGKSLCEHALIETVKKVIEKARECQCTLLLPVDAIVGFRFEKDAPHRLYDIGDIPEDGMILDVGTRSIAHINAVIDKAATLVWNGPLGVFEMSPFDQGTIAVARHAAELSLTGKLVSIAGGGDTVFALNHAGVADDFTYLSTAGGAFLEWMEGKMLPGILALTQA.

Residues 21 to 23 (DFN), arginine 36, 59 to 62 (HCGR), arginine 118, and arginine 151 each bind substrate. ATP is bound by residues lysine 201, glutamate 323, and 353-356 (GGDT).

This sequence belongs to the phosphoglycerate kinase family. In terms of assembly, monomer.

It is found in the cytoplasm. It catalyses the reaction (2R)-3-phosphoglycerate + ATP = (2R)-3-phospho-glyceroyl phosphate + ADP. It functions in the pathway carbohydrate degradation; glycolysis; pyruvate from D-glyceraldehyde 3-phosphate: step 2/5. The polypeptide is Phosphoglycerate kinase (Bartonella henselae (strain ATCC 49882 / DSM 28221 / CCUG 30454 / Houston 1) (Rochalimaea henselae)).